A 904-amino-acid chain; its full sequence is MRGGGLICALVVGALVAAVASAAPAAPAAPRASGGVAATVAANGGPASRPPPVPSPATTKARKRKTKKPPKRPEATPPPDANATVAAGHATLRAHLREIKVENADAQFYVCPPPTGATVVQFEQPRRCPTRPEGQNYTEGIAVVFKENIAPYKFKATMYYKDVTVSQVWFGHRYSQFMGIFEDRAPVPFEEVIDKINAKGVCRSTAKYVRNNMETTAFHRDDHETDMELKPAKVATRTSRGWHTTDLKYNPSRVEAFHRYGTTVNCIVEEVDARSVYPYDEFVLATGDFVYMSPFYGYREGSHTEHTSYAADRFKQVDGFYARDLTTKARATSPTTRNLLTTPKFTVAWDWVPKRPAVCTMTKWQEVDEMLRAEYGGSFRFSSDAISTTFTTNLTQYSLSRVDLGDCIGRDAREAIDRMFARKYNATHIKVGQPQYYLATGGFLIAYQPLLSNTLAELYVREYMREQDRKPRNATPAPLREAPSANASVERIKTTSSIEFARLQFTYNHIQRHVNDMLGRIAVAWCELQNHELTLWNEARKLNPNAIASATVGRRVSARMLGDVMAVSTCVPVAPDNVIVQNSMRVSSRPGTCYSRPLVSFRYEDQGPLIEGQLGENNELRLTRDALEPCTVGHRRYFIFGGGYVYFEEYAYSHQLSRADVTTVSTFIDLNITMLEDHEFVPLEVYTRHEIKDSGLLDYTEVQRRNQLHDLRFADIDTVIRADANAAMFAGLCAFFEGMGDLGRAVGKVVMGVVGGVVSAVSGVSSFMSNPFGALAVGLLVLAGLVAAFFAFRYVLQLQRNPMKALYPLTTKELKTSDPGGVGGEGEEGAEGGGFDEAKLAEAREMIRYMALVSAMERTEHKARKKGTSALLSSKVTNMVLRKRNKARYSPLHNEDEAGDEDEL.

Positions 1–22 are cleaved as a signal peptide; that stretch reads MRGGGLICALVVGALVAAVASA. Residues 23–771 lie on the Virion surface side of the membrane; sequence APAAPAAPRA…SGVSSFMSNP (749 aa). The tract at residues 40–83 is disordered; the sequence is VAANGGPASRPPPVPSPATTKARKRKTKKPPKRPEATPPPDANA. The segment covering 60-70 has biased composition (basic residues); the sequence is KARKRKTKKPP. N-linked (GlcNAc...) asparagine; by host glycosylation is found at Asn-82 and Asn-136. Intrachain disulfides connect Cys-111/Cys-570, Cys-128/Cys-526, Cys-202/Cys-266, Cys-359/Cys-407, and Cys-593/Cys-630. Involved in fusion and/or binding to host membrane regions lie at residues 168–174 and 253–260; these read VWFGHRY and RVEAFHRY. Residues Asn-393, Asn-425, and Asn-486 are each glycosylated (N-linked (GlcNAc...) asparagine; by host). The segment at 467-490 is disordered; sequence QDRKPRNATPAPLREAPSANASVE. Asn-671 is a glycosylation site (N-linked (GlcNAc...) asparagine; by host). Hydrophobic membrane proximal region regions lie at residues 716-769 and 728-768; these read IDTV…SFMS and MFAG…SSFM. The chain crosses the membrane as a helical span at residues 772-792; the sequence is FGALAVGLLVLAGLVAAFFAF. The Intravirion segment spans residues 793–904; it reads RYVLQLQRNP…EDEAGDEDEL (112 aa). The tract at residues 816–835 is disordered; it reads TSDPGGVGGEGEEGAEGGGF. The Golgi targeting motif lies at 849 to 852; that stretch reads YMAL. Residues 883–904 form a disordered region; that stretch reads KRNKARYSPLHNEDEAGDEDEL. The short motif at 889 to 892 is the Internalization motif element; it reads YSPL.

It belongs to the herpesviridae glycoprotein B family. In terms of assembly, homotrimer; disulfide-linked. Binds to heparan sulfate proteoglycans. Interacts with gH/gL heterodimer.

Its subcellular location is the virion membrane. It is found in the host cell membrane. It localises to the host endosome membrane. The protein localises to the host Golgi apparatus membrane. Its function is as follows. Envelope glycoprotein that forms spikes at the surface of virion envelope. Essential for the initial attachment to heparan sulfate moieties of the host cell surface proteoglycans. Involved in fusion of viral and cellular membranes leading to virus entry into the host cell. Following initial binding to its host receptors, membrane fusion is mediated by the fusion machinery composed at least of gB and the heterodimer gH/gL. May be involved in the fusion between the virion envelope and the outer nuclear membrane during virion egress. This chain is Envelope glycoprotein B, found in Homo sapiens (Human).